We begin with the raw amino-acid sequence, 576 residues long: Pentatricopeptide repeat-containing protein At1g79080, chloroplastic (576 aa).

Residues 1-37 constitute a chloroplast transit peptide; that stretch reads MSTLLNSVLSMASPESSPRKAVGFVSHIPSGFLHFSS. PPR repeat units lie at residues 105–139, 140–174, 175–209, 210–244, 245–279, 280–314, 315–349, 352–386, 387–417, 422–456, 457–487, 493–527, and 528–562; these read NVAHSTQLLYDLCKANRLKKAIRVIELMVSSGIIP, DASAYTYLVNQLCKRGNVGYAMQLVEKMEDHGYPS, NTVTYNALVRGLCMLGSLNQSLQFVERLMQKGLAP, NAFTYSFLLEAAYKERGTDEAVKLLDEIIVKGGEP, NLVSYNVLLTGFCKEGRTDDAMALFRELPAKGFKA, NVVSYNILLRCLCCDGRWEEANSLLAEMDGGDRAP, SVVTYNILINSLAFHGRTEQALQVLKEMSKGNHQF, TATSYNPVIARLCKEGKVDLVVKCLDEMIYRRCKP, NEGTYNAIGSLCEHNSKVQEAFYIIQSLSNK, THDFYKSVITSLCRKGNTFAAFQLLYEMTRCGFDP, DAHTYSALIRGLCLEGMFTGAMEVLSIMEES, TVDNFNAMILGLCKIRRTDLAMEVFEMMVEKKRMP, and NETTYAILVEGIAHEDELELAKEVLDELRLRKVIG.

Belongs to the PPR family. P subfamily.

The protein localises to the plastid. The protein resides in the chloroplast. This Arabidopsis thaliana (Mouse-ear cress) protein is Pentatricopeptide repeat-containing protein At1g79080, chloroplastic.